The sequence spans 395 residues: 8-amino-7-oxononanoate synthase (395 aa).

108–109 lines the pyridoxal 5'-phosphate pocket; the sequence is GF. Position 134 (H134) interacts with substrate. Pyridoxal 5'-phosphate contacts are provided by residues S184, 209–212, and 240–243; these read DDAH and TLSK. Residue K243 is modified to N6-(pyridoxal phosphate)lysine. T357 is a binding site for substrate.

The protein belongs to the class-II pyridoxal-phosphate-dependent aminotransferase family. BioF subfamily. Homodimer. The cofactor is pyridoxal 5'-phosphate.

It carries out the reaction 6-carboxyhexanoyl-[ACP] + L-alanine + H(+) = (8S)-8-amino-7-oxononanoate + holo-[ACP] + CO2. It participates in cofactor biosynthesis; biotin biosynthesis. Catalyzes the decarboxylative condensation of pimeloyl-[acyl-carrier protein] and L-alanine to produce 8-amino-7-oxononanoate (AON), [acyl-carrier protein], and carbon dioxide. The sequence is that of 8-amino-7-oxononanoate synthase from Fervidobacterium nodosum (strain ATCC 35602 / DSM 5306 / Rt17-B1).